The sequence spans 201 residues: IDLSRF-like peptide (201 aa).

The signal sequence occupies residues 1–28 (MVRRFCNGAVALGIALTACAAFPRAIMA). A propeptide spanning residues 43–201 (SDACHPYEPF…EKLVKTGFLD (159 aa)) is cleaved from the precursor. The region spanning 45–85 (ACHPYEPFKCPGDGLCISIQYLCDGAPDCQDGYDEDSRLCT) is the LDL-receptor class A domain. 3 disulfide bridges follow: C46-C60, C54-C73, and C67-C84.

As to expression, expressed in central brain, antennal and optical lobes, in gnathal, thoracic and abdominal ganglia and in the retrocerebral complex (at protein level).

It is found in the secreted. The sequence is that of IDLSRF-like peptide from Camponotus floridanus (Florida carpenter ant).